A 108-amino-acid chain; its full sequence is Large ribosomal subunit protein eL33A (108 aa).

The protein belongs to the eukaryotic ribosomal protein eL33 family. As to quaternary structure, component of the large ribosomal subunit (LSU). Mature yeast ribosomes consist of a small (40S) and a large (60S) subunit. The 40S small subunit contains 1 molecule of ribosomal RNA (18S rRNA) and at least 33 different proteins. The large 60S subunit contains 3 rRNA molecules (25S, 5.8S and 5S rRNA) and at least 46 different proteins.

The protein localises to the cytoplasm. It is found in the nucleus. It localises to the nucleolus. In terms of biological role, component of the ribosome, a large ribonucleoprotein complex responsible for the synthesis of proteins in the cell. The small ribosomal subunit (SSU) binds messenger RNAs (mRNAs) and translates the encoded message by selecting cognate aminoacyl-transfer RNA (tRNA) molecules. The large subunit (LSU) contains the ribosomal catalytic site termed the peptidyl transferase center (PTC), which catalyzes the formation of peptide bonds, thereby polymerizing the amino acids delivered by tRNAs into a polypeptide chain. The nascent polypeptides leave the ribosome through a tunnel in the LSU and interact with protein factors that function in enzymatic processing, targeting, and the membrane insertion of nascent chains at the exit of the ribosomal tunnel. The protein is Large ribosomal subunit protein eL33A (rpl35b) of Schizosaccharomyces pombe (strain 972 / ATCC 24843) (Fission yeast).